The primary structure comprises 120 residues: Small ribosomal subunit protein uS10 (120 aa).

2 positions are modified to phosphoserine: S16 and S18.

This sequence belongs to the universal ribosomal protein uS10 family. As to expression, expressed ubiquitously in embryos, highest expression is in the midgut.

This Drosophila melanogaster (Fruit fly) protein is Small ribosomal subunit protein uS10 (RpS20).